A 291-amino-acid polypeptide reads, in one-letter code: Ribosomal RNA small subunit methyltransferase A (291 aa).

Residues N28, L30, G55, E77, D103, and N123 each coordinate S-adenosyl-L-methionine.

It belongs to the class I-like SAM-binding methyltransferase superfamily. rRNA adenine N(6)-methyltransferase family. RsmA subfamily.

The protein resides in the cytoplasm. The catalysed reaction is adenosine(1518)/adenosine(1519) in 16S rRNA + 4 S-adenosyl-L-methionine = N(6)-dimethyladenosine(1518)/N(6)-dimethyladenosine(1519) in 16S rRNA + 4 S-adenosyl-L-homocysteine + 4 H(+). Specifically dimethylates two adjacent adenosines (A1518 and A1519) in the loop of a conserved hairpin near the 3'-end of 16S rRNA in the 30S particle. May play a critical role in biogenesis of 30S subunits. The chain is Ribosomal RNA small subunit methyltransferase A from Azorhizobium caulinodans (strain ATCC 43989 / DSM 5975 / JCM 20966 / LMG 6465 / NBRC 14845 / NCIMB 13405 / ORS 571).